The sequence spans 425 residues: Histidine--tRNA ligase (425 aa).

It belongs to the class-II aminoacyl-tRNA synthetase family. As to quaternary structure, homodimer.

The protein localises to the cytoplasm. The enzyme catalyses tRNA(His) + L-histidine + ATP = L-histidyl-tRNA(His) + AMP + diphosphate + H(+). The sequence is that of Histidine--tRNA ligase from Listeria monocytogenes serovar 1/2a (strain ATCC BAA-679 / EGD-e).